Reading from the N-terminus, the 632-residue chain is Chaperone protein HtpG (632 aa).

The interval 1–343 is a; substrate-binding; it reads MSEQTINNKE…SNDLALNVSR (343 aa). The interval 344–560 is b; the sequence is EILQDNKVTQ…DFEMGTQMAK (217 aa). Residues 561–632 form a c region; the sequence is LLEAAGQAAP…LSAMNQLLSK (72 aa).

It belongs to the heat shock protein 90 family. As to quaternary structure, homodimer.

It is found in the cytoplasm. Molecular chaperone. Has ATPase activity. In Aliivibrio salmonicida (strain LFI1238) (Vibrio salmonicida (strain LFI1238)), this protein is Chaperone protein HtpG.